Here is a 110-residue protein sequence, read N- to C-terminus: Quaternary ammonium compound-resistance protein QacE (110 aa).

4 helical membrane passes run 1–21 (MKGW…TSAL), 30–50 (LAPS…LSLV), 58–78 (VAYA…AWLL), and 85–105 (AWGF…NLLS).

The protein belongs to the drug/metabolite transporter (DMT) superfamily. Small multidrug resistance (SMR) (TC 2.A.7.1) family.

It localises to the cell membrane. Its function is as follows. Multidrug exporter. Is implicated for the resistance to bacteriocidal quaternary ammonium compounds. This chain is Quaternary ammonium compound-resistance protein QacE (qacE), found in Escherichia coli.